We begin with the raw amino-acid sequence, 398 residues long: Bifunctional enzyme IspD/IspF (398 aa).

The tract at residues M1 to I234 is 2-C-methyl-D-erythritol 4-phosphate cytidylyltransferase. The tract at residues R235–D398 is 2-C-methyl-D-erythritol 2,4-cyclodiphosphate synthase. 2 residues coordinate a divalent metal cation: D241 and H243. Residues D241–H243 and H267–S268 each bind 4-CDP-2-C-methyl-D-erythritol 2-phosphate. H275 contributes to the a divalent metal cation binding site. 4-CDP-2-C-methyl-D-erythritol 2-phosphate-binding positions include D289–G291, T365–E368, F372, and R375.

It in the N-terminal section; belongs to the IspD/TarI cytidylyltransferase family. IspD subfamily. The protein in the C-terminal section; belongs to the IspF family. A divalent metal cation is required as a cofactor.

It catalyses the reaction 2-C-methyl-D-erythritol 4-phosphate + CTP + H(+) = 4-CDP-2-C-methyl-D-erythritol + diphosphate. The enzyme catalyses 4-CDP-2-C-methyl-D-erythritol 2-phosphate = 2-C-methyl-D-erythritol 2,4-cyclic diphosphate + CMP. Its pathway is isoprenoid biosynthesis; isopentenyl diphosphate biosynthesis via DXP pathway; isopentenyl diphosphate from 1-deoxy-D-xylulose 5-phosphate: step 2/6. It participates in isoprenoid biosynthesis; isopentenyl diphosphate biosynthesis via DXP pathway; isopentenyl diphosphate from 1-deoxy-D-xylulose 5-phosphate: step 4/6. Its function is as follows. Bifunctional enzyme that catalyzes the formation of 4-diphosphocytidyl-2-C-methyl-D-erythritol from CTP and 2-C-methyl-D-erythritol 4-phosphate (MEP) (IspD), and catalyzes the conversion of 4-diphosphocytidyl-2-C-methyl-D-erythritol 2-phosphate (CDP-ME2P) to 2-C-methyl-D-erythritol 2,4-cyclodiphosphate (ME-CPP) with a corresponding release of cytidine 5-monophosphate (CMP) (IspF). In Rhodopseudomonas palustris (strain BisB18), this protein is Bifunctional enzyme IspD/IspF.